We begin with the raw amino-acid sequence, 227 residues long: Endonuclease V (227 aa).

Mg(2+) is bound by residues D46 and D114.

Belongs to the endonuclease V family. The cofactor is Mg(2+).

The protein localises to the cytoplasm. It carries out the reaction Endonucleolytic cleavage at apurinic or apyrimidinic sites to products with a 5'-phosphate.. In terms of biological role, DNA repair enzyme involved in the repair of deaminated bases. Selectively cleaves double-stranded DNA at the second phosphodiester bond 3' to a deoxyinosine leaving behind the intact lesion on the nicked DNA. In Alkalilimnicola ehrlichii (strain ATCC BAA-1101 / DSM 17681 / MLHE-1), this protein is Endonuclease V.